The chain runs to 483 residues: tRNA-2-methylthio-N(6)-dimethylallyladenosine synthase (483 aa).

Residues 31–148 (KKLYIETQGC…LPQMLDQHHA (118 aa)) form the MTTase N-terminal domain. 6 residues coordinate [4Fe-4S] cluster: Cys40, Cys77, Cys111, Cys192, Cys196, and Cys199. The Radical SAM core domain occupies 178-410 (RVEGFKAFVS…QQVIKQSSIE (233 aa)). The TRAM domain maps to 413-477 (DAMLGKIERV…LNLVYGELLN (65 aa)).

Belongs to the methylthiotransferase family. MiaB subfamily. In terms of assembly, monomer. [4Fe-4S] cluster is required as a cofactor.

Its subcellular location is the cytoplasm. The enzyme catalyses N(6)-dimethylallyladenosine(37) in tRNA + (sulfur carrier)-SH + AH2 + 2 S-adenosyl-L-methionine = 2-methylsulfanyl-N(6)-dimethylallyladenosine(37) in tRNA + (sulfur carrier)-H + 5'-deoxyadenosine + L-methionine + A + S-adenosyl-L-homocysteine + 2 H(+). In terms of biological role, catalyzes the methylthiolation of N6-(dimethylallyl)adenosine (i(6)A), leading to the formation of 2-methylthio-N6-(dimethylallyl)adenosine (ms(2)i(6)A) at position 37 in tRNAs that read codons beginning with uridine. In Acinetobacter baumannii (strain AB0057), this protein is tRNA-2-methylthio-N(6)-dimethylallyladenosine synthase.